Reading from the N-terminus, the 333-residue chain is C4-dicarboxylate-binding periplasmic protein DctP (333 aa).

The signal sequence occupies residues 1 to 26 (MLTRRILGALVGATALSLALSVPALA).

This sequence belongs to the bacterial solute-binding protein 7 family. In terms of assembly, the complex comprises the extracytoplasmic solute receptor protein DctP, and the two transmembrane proteins DctQ and DctM.

It localises to the periplasm. Functionally, part of the tripartite ATP-independent periplasmic (TRAP) transport system DctPQM involved in C4-dicarboxylates uptake. Binds C4-dicarboxylates such as fumarate, succinate, L-malate and D-malate. The polypeptide is C4-dicarboxylate-binding periplasmic protein DctP (Rhodobacter capsulatus (Rhodopseudomonas capsulata)).